We begin with the raw amino-acid sequence, 478 residues long: V-type ATP synthase beta chain (478 aa).

Belongs to the ATPase alpha/beta chains family.

Its function is as follows. Produces ATP from ADP in the presence of a proton gradient across the membrane. The V-type beta chain is a regulatory subunit. In Thermus thermophilus (strain ATCC BAA-163 / DSM 7039 / HB27), this protein is V-type ATP synthase beta chain.